The following is a 505-amino-acid chain: Cholesteryl ester transfer protein (505 aa).

The signal sequence occupies residues 1–24; the sequence is MLWAGGMRLGMARILLMLVHAAAA. N-linked (GlcNAc...) asparagine glycans are attached at residues N68 and N114. C169 and C210 are disulfide-bonded. 3 N-linked (GlcNAc...) asparagine glycosylation sites follow: N266, N344, and N422.

Belongs to the BPI/LBP/Plunc superfamily. BPI/LBP family. In terms of tissue distribution, highly expressed in liver brain, heart, and spleen. Secreted in plasma.

The protein localises to the secreted. The enzyme catalyses cholesteryl (9Z-octadecenoate)(in) = cholesteryl (9Z-octadecenoate)(out). It catalyses the reaction 1,2,3-tri-(9Z-octadecenoyl)-glycerol(in) = 1,2,3-tri-(9Z-octadecenoyl)-glycerol(out). It carries out the reaction cholesteryl (9Z,12Z)-octadecadienoate(in) = cholesteryl (9Z,12Z)-octadecadienoate(out). Involved in the transfer of neutral lipids, including cholesteryl ester and triglyceride, among lipoprotein particles. Allows the net movement of cholesteryl ester from high density lipoproteins/HDL to triglyceride-rich very low density lipoproteins/VLDL, and the equimolar transport of triglyceride from VLDL to HDL. Regulates the reverse cholesterol transport, by which excess cholesterol is removed from peripheral tissues and returned to the liver for elimination. The chain is Cholesteryl ester transfer protein from Gallus gallus (Chicken).